A 251-amino-acid polypeptide reads, in one-letter code: DNA-directed RNA polymerase III subunit RPC7 (251 aa).

The interval 186–251 (DDASTGDGAA…EEDPNEEAAF (66 aa)) is disordered. At S189 the chain carries Phosphoserine. 2 stretches are compositionally biased toward acidic residues: residues 203 to 225 (GEDD…DDDY) and 234 to 251 (GDDD…EAAF).

This sequence belongs to the eukaryotic RPC7 RNA polymerase subunit family. Component of the RNA polymerase III (Pol III) complex consisting of 17 subunits.

It localises to the nucleus. Its function is as follows. DNA-dependent RNA polymerase catalyzes the transcription of DNA into RNA using the four ribonucleoside triphosphates as substrates. Specific peripheric component of RNA polymerase III which synthesizes small RNAs, such as 5S rRNA and tRNAs. C31 is involved in the formation of the initiation complex. The sequence is that of DNA-directed RNA polymerase III subunit RPC7 (RPC31) from Saccharomyces cerevisiae (strain ATCC 204508 / S288c) (Baker's yeast).